A 319-amino-acid chain; its full sequence is Beta-ketoacyl-[acyl-carrier-protein] synthase III (319 aa).

Residues Cys113 and His246 contribute to the active site. The interval 247–251 (QANIR) is ACP-binding. Asn276 is an active-site residue.

Belongs to the thiolase-like superfamily. FabH family. In terms of assembly, homodimer.

The protein localises to the cytoplasm. It carries out the reaction malonyl-[ACP] + acetyl-CoA + H(+) = 3-oxobutanoyl-[ACP] + CO2 + CoA. Its pathway is lipid metabolism; fatty acid biosynthesis. In terms of biological role, catalyzes the condensation reaction of fatty acid synthesis by the addition to an acyl acceptor of two carbons from malonyl-ACP. Catalyzes the first condensation reaction which initiates fatty acid synthesis and may therefore play a role in governing the total rate of fatty acid production. Possesses both acetoacetyl-ACP synthase and acetyl transacylase activities. Its substrate specificity determines the biosynthesis of branched-chain and/or straight-chain of fatty acids. This chain is Beta-ketoacyl-[acyl-carrier-protein] synthase III, found in Ehrlichia canis (strain Jake).